A 165-amino-acid chain; its full sequence is Transcription factor TCP16 (165 aa).

Positions 1–11 (MDSKNGINNSQ) are enriched in polar residues. Disordered regions lie at residues 1–21 (MDSK…KDRH) and 146–165 (GNAT…TTTV). Basic residues predominate over residues 12–21 (KARRTPKDRH). In terms of domain architecture, TCP spans 17–71 (PKDRHLKIGGRDRRIRIPPSVAPQLFRLTKELGFKTDGETVSWLLQNAEPAIFAA). Over residues 148-165 (ATASDTTSAATTTATTTV) the composition is skewed to low complexity.

Mostly in anther in young buds.

The protein resides in the nucleus. Functionally, required during early processes in pollen development. The chain is Transcription factor TCP16 (TCP16) from Arabidopsis thaliana (Mouse-ear cress).